The sequence spans 234 residues: 2-C-methyl-D-erythritol 4-phosphate cytidylyltransferase (234 aa).

It belongs to the IspD/TarI cytidylyltransferase family. IspD subfamily.

The enzyme catalyses 2-C-methyl-D-erythritol 4-phosphate + CTP + H(+) = 4-CDP-2-C-methyl-D-erythritol + diphosphate. Its pathway is isoprenoid biosynthesis; isopentenyl diphosphate biosynthesis via DXP pathway; isopentenyl diphosphate from 1-deoxy-D-xylulose 5-phosphate: step 2/6. In terms of biological role, catalyzes the formation of 4-diphosphocytidyl-2-C-methyl-D-erythritol from CTP and 2-C-methyl-D-erythritol 4-phosphate (MEP). The sequence is that of 2-C-methyl-D-erythritol 4-phosphate cytidylyltransferase from Pseudomonas aeruginosa (strain UCBPP-PA14).